Here is a 473-residue protein sequence, read N- to C-terminus: Sulfate adenylyltransferase subunit 1 (473 aa).

One can recognise a tr-type G domain in the interval 19–238 (KTLLKFLTCG…IKIKNSISSE (220 aa)). The G1 stretch occupies residues 28-35 (GSVDDGKS). Position 28 to 35 (28 to 35 (GSVDDGKS)) interacts with GTP. The G2 stretch occupies residues 86-90 (GITID). The interval 107-110 (DTPG) is G3. Residues 107–111 (DTPGH) and 162–165 (NKMD) contribute to the GTP site. The segment at 162–165 (NKMD) is G4. The interval 200–202 (SAL) is G5.

This sequence belongs to the TRAFAC class translation factor GTPase superfamily. Classic translation factor GTPase family. CysN/NodQ subfamily. As to quaternary structure, heterodimer composed of CysD, the smaller subunit, and CysN.

The enzyme catalyses sulfate + ATP + H(+) = adenosine 5'-phosphosulfate + diphosphate. It functions in the pathway sulfur metabolism; hydrogen sulfide biosynthesis; sulfite from sulfate: step 1/3. Its function is as follows. With CysD forms the ATP sulfurylase (ATPS) that catalyzes the adenylation of sulfate producing adenosine 5'-phosphosulfate (APS) and diphosphate, the first enzymatic step in sulfur assimilation pathway. APS synthesis involves the formation of a high-energy phosphoric-sulfuric acid anhydride bond driven by GTP hydrolysis by CysN coupled to ATP hydrolysis by CysD. This Buchnera aphidicola subsp. Acyrthosiphon pisum (strain 5A) protein is Sulfate adenylyltransferase subunit 1.